The chain runs to 109 residues: MTAKVRVIFRAAGGFEHLVETEAGVSLMEAAVLNGVDGIEAVCGGACACATCHVYVGPEWLDALKPPSETEDEMLDCVAERAPHSRLSCQIRLTDLLDGLTLELPKAQS.

In terms of domain architecture, 2Fe-2S ferredoxin-type spans 3 to 108; that stretch reads AKVRVIFRAA…GLTLELPKAQ (106 aa). [2Fe-2S] cluster contacts are provided by cysteine 43, cysteine 49, cysteine 52, and cysteine 89.

This sequence belongs to the adrenodoxin/putidaredoxin family. Monomer. Carbazole 1,9a-dioxygenase complex consists of a terminal oxygenase component CarAa, a ferredoxin reductase component fdr and a ferredoxin component CarAc. [2Fe-2S] cluster serves as cofactor.

Its function is as follows. Part of the multicomponent carbazole 1,9a-dioxygenase (CARDO), that converts carbazole (CAR) into 2-aminobiphenyl-2,3-diol. Acts as a mediator in the electron transfer from fdr to CarAa. The polypeptide is Ferredoxin CarAc (carAc) (Sphingomonas sp).